Here is a 233-residue protein sequence, read N- to C-terminus: Homeobox protein not2 (233 aa).

Residues 135–194 constitute a DNA-binding region (homeobox); the sequence is LKRIRTVFTPEQLERLEKEFLKQQYMVGTERVDLASTLNLTETQVKVWFQNRRIKWRKQS. The segment at 212–233 is disordered; it reads SSDHTDDSRETEEEEDDVDVEL. Over residues 220–233 the composition is skewed to acidic residues; it reads RETEEEEDDVDVEL.

In terms of tissue distribution, localized to the dorsal lip of the blastopore (Spemann organizer) during early gastrulation, after which expression continues in tissues derived from the organizer. Expressed in the notochord during mid-gastrulation, the chordoneural hinge, notochord and ventral spinal cord of the tailbud at stage 22, and finally the tip of the tail in the tadpole (stage 35).

Its subcellular location is the nucleus. In terms of biological role, transcriptional repressor. Plays a fundamental role in notochord formation, acting within the mesodermal region. Acts downstream of gsc and upstream of chrd and foxa4-A/pintallavis. The sequence is that of Homeobox protein not2 from Xenopus laevis (African clawed frog).